The chain runs to 95 residues: Putative pterin-4-alpha-carbinolamine dehydratase (95 aa).

It belongs to the pterin-4-alpha-carbinolamine dehydratase family.

It catalyses the reaction (4aS,6R)-4a-hydroxy-L-erythro-5,6,7,8-tetrahydrobiopterin = (6R)-L-erythro-6,7-dihydrobiopterin + H2O. The sequence is that of Putative pterin-4-alpha-carbinolamine dehydratase from Prochlorococcus marinus (strain NATL2A).